The following is a 258-amino-acid chain: Imidazole glycerol phosphate synthase subunit HisF (258 aa).

Catalysis depends on residues Asp11 and Asp130.

This sequence belongs to the HisA/HisF family. In terms of assembly, heterodimer of HisH and HisF.

Its subcellular location is the cytoplasm. The catalysed reaction is 5-[(5-phospho-1-deoxy-D-ribulos-1-ylimino)methylamino]-1-(5-phospho-beta-D-ribosyl)imidazole-4-carboxamide + L-glutamine = D-erythro-1-(imidazol-4-yl)glycerol 3-phosphate + 5-amino-1-(5-phospho-beta-D-ribosyl)imidazole-4-carboxamide + L-glutamate + H(+). It functions in the pathway amino-acid biosynthesis; L-histidine biosynthesis; L-histidine from 5-phospho-alpha-D-ribose 1-diphosphate: step 5/9. Its function is as follows. IGPS catalyzes the conversion of PRFAR and glutamine to IGP, AICAR and glutamate. The HisF subunit catalyzes the cyclization activity that produces IGP and AICAR from PRFAR using the ammonia provided by the HisH subunit. In Shigella boydii serotype 18 (strain CDC 3083-94 / BS512), this protein is Imidazole glycerol phosphate synthase subunit HisF.